We begin with the raw amino-acid sequence, 243 residues long: Ubiquinone/menaquinone biosynthesis C-methyltransferase UbiE (243 aa).

Residues T69, D90, and 116–117 contribute to the S-adenosyl-L-methionine site; that span reads DA.

The protein belongs to the class I-like SAM-binding methyltransferase superfamily. MenG/UbiE family.

The enzyme catalyses a 2-demethylmenaquinol + S-adenosyl-L-methionine = a menaquinol + S-adenosyl-L-homocysteine + H(+). It catalyses the reaction a 2-methoxy-6-(all-trans-polyprenyl)benzene-1,4-diol + S-adenosyl-L-methionine = a 5-methoxy-2-methyl-3-(all-trans-polyprenyl)benzene-1,4-diol + S-adenosyl-L-homocysteine + H(+). It functions in the pathway quinol/quinone metabolism; menaquinone biosynthesis; menaquinol from 1,4-dihydroxy-2-naphthoate: step 2/2. Its pathway is cofactor biosynthesis; ubiquinone biosynthesis. Functionally, methyltransferase required for the conversion of demethylmenaquinol (DMKH2) to menaquinol (MKH2) and the conversion of 2-polyprenyl-6-methoxy-1,4-benzoquinol (DDMQH2) to 2-polyprenyl-3-methyl-6-methoxy-1,4-benzoquinol (DMQH2). The chain is Ubiquinone/menaquinone biosynthesis C-methyltransferase UbiE from Cupriavidus metallidurans (strain ATCC 43123 / DSM 2839 / NBRC 102507 / CH34) (Ralstonia metallidurans).